The sequence spans 326 residues: Sucrose operon repressor (326 aa).

An HTH lacI-type domain is found at methionine 1 to glycine 57. The segment at residues leucine 5–asparagine 24 is a DNA-binding region (H-T-H motif).

Functionally, negative regulator of scrB expression. This is Sucrose operon repressor (scrR) from Pediococcus pentosaceus.